The chain runs to 210 residues: Somatotropin (210 aa).

The N-terminal stretch at 1 to 22 (MGQVFLLMPVLLVSCFLSQGAA) is a signal peptide. Zn(2+) is bound at residue H38. A disulfide bond links C71 and C183. E192 lines the Zn(2+) pocket. Residues C200 and C208 are joined by a disulfide bond.

This sequence belongs to the somatotropin/prolactin family.

The protein localises to the secreted. Its function is as follows. Growth hormone plays an important role in growth control and is involved in the regulation of several anabolic processes. Implicated as an osmoregulatory substance important for seawater adaptation. The sequence is that of Somatotropin (gh) from Oncorhynchus kisutch (Coho salmon).